The sequence spans 130 residues: Small ribosomal subunit protein uS9 (130 aa).

This sequence belongs to the universal ribosomal protein uS9 family.

This Colwellia psychrerythraea (strain 34H / ATCC BAA-681) (Vibrio psychroerythus) protein is Small ribosomal subunit protein uS9.